The chain runs to 127 residues: Putative defensin-like protein 180 (127 aa).

The signal sequence occupies residues 1–26; that stretch reads MERITSLVFFASFLIIFVSGVNQTRA. 8 cysteine pairs are disulfide-bonded: Cys-29–Cys-70, Cys-36–Cys-55, Cys-39–Cys-64, Cys-43–Cys-66, Cys-81–Cys-127, Cys-92–Cys-112, Cys-97–Cys-121, and Cys-101–Cys-123.

The protein belongs to the DEFL family.

The protein resides in the secreted. In Arabidopsis thaliana (Mouse-ear cress), this protein is Putative defensin-like protein 180 (LCR58).